The chain runs to 1444 residues: ABC transporter G family member 39 (1444 aa).

The interval Met-1 to Ser-36 is disordered. A compositionally biased stretch (polar residues) spans Thr-19–Arg-29. Residues Leu-154 to Glu-426 form the ABC transporter 1 domain. Gly-187 to Thr-194 provides a ligand contact to ATP. One can recognise an ABC transmembrane type-2 1 domain in the interval Glu-504–Phe-717. The next 6 helical transmembrane spans lie at Phe-522–Phe-542, Gly-555–Ala-575, Ile-610–Phe-630, Val-642–Gly-662, Val-667–Ile-687, and Ile-754–Leu-774. Positions Ile-846–Gln-1098 constitute an ABC transporter 2 domain. Gly-891–Thr-898 is an ATP binding site. Residues Thr-1171–Tyr-1385 form the ABC transmembrane type-2 2 domain. Helical transmembrane passes span Ala-1192–Leu-1212, Leu-1220–Asn-1240, Ile-1278–Phe-1298, Phe-1305–Met-1325, Ile-1335–Ile-1355, Ile-1362–Ala-1382, and Leu-1414–Phe-1434.

The protein belongs to the ABC transporter superfamily. ABCG family. PDR (TC 3.A.1.205) subfamily.

The protein localises to the membrane. Functionally, may be a general defense protein. The polypeptide is ABC transporter G family member 39 (Oryza sativa subsp. japonica (Rice)).